Consider the following 186-residue polypeptide: Peptidyl-tRNA hydrolase (186 aa).

Residue Y14 participates in tRNA binding. The Proton acceptor role is filled by H19. TRNA-binding residues include Y61, N63, and N107.

This sequence belongs to the PTH family. In terms of assembly, monomer.

It localises to the cytoplasm. It carries out the reaction an N-acyl-L-alpha-aminoacyl-tRNA + H2O = an N-acyl-L-amino acid + a tRNA + H(+). Functionally, hydrolyzes ribosome-free peptidyl-tRNAs (with 1 or more amino acids incorporated), which drop off the ribosome during protein synthesis, or as a result of ribosome stalling. In terms of biological role, catalyzes the release of premature peptidyl moieties from peptidyl-tRNA molecules trapped in stalled 50S ribosomal subunits, and thus maintains levels of free tRNAs and 50S ribosomes. This is Peptidyl-tRNA hydrolase from Helicobacter pylori (strain J99 / ATCC 700824) (Campylobacter pylori J99).